A 423-amino-acid polypeptide reads, in one-letter code: Histidine--tRNA ligase (423 aa).

It belongs to the class-II aminoacyl-tRNA synthetase family. Homodimer.

The protein resides in the cytoplasm. It carries out the reaction tRNA(His) + L-histidine + ATP = L-histidyl-tRNA(His) + AMP + diphosphate + H(+). The sequence is that of Histidine--tRNA ligase from Corynebacterium diphtheriae (strain ATCC 700971 / NCTC 13129 / Biotype gravis).